Here is a 207-residue protein sequence, read N- to C-terminus: Large ribosomal subunit protein uL4 (207 aa).

A disordered region spans residues 49 to 78; that stretch reads HAVKNRSAVSGGGRKPWRQKGTGRARQGSI.

Belongs to the universal ribosomal protein uL4 family. In terms of assembly, part of the 50S ribosomal subunit.

Functionally, one of the primary rRNA binding proteins, this protein initially binds near the 5'-end of the 23S rRNA. It is important during the early stages of 50S assembly. It makes multiple contacts with different domains of the 23S rRNA in the assembled 50S subunit and ribosome. Its function is as follows. Forms part of the polypeptide exit tunnel. The sequence is that of Large ribosomal subunit protein uL4 from Streptococcus agalactiae serotype Ia (strain ATCC 27591 / A909 / CDC SS700).